Here is a 431-residue protein sequence, read N- to C-terminus: uncharacterized protein (431 aa).

2 disordered regions span residues 17–66 (VDPE…GQQA) and 81–415 (GSVT…ALPR). Basic and acidic residues predominate over residues 91–106 (DKADREPAARPRDPRS). The span at 173–195 (TYRRRRPTAATPSRKKKARRGPK) shows a compositional bias: basic residues. The span at 235–244 (RTPGPVHSAA) shows a compositional bias: low complexity. The span at 299 to 312 (RMGGSSGGRGGTPG) shows a compositional bias: gly residues. The span at 317 to 342 (RAAPGARPTAPDGAPGRWDGPADGPA) shows a compositional bias: low complexity. Residues 343 to 360 (PGLGRGGWGVGREAGGSG) show a composition bias toward gly residues.

This is an uncharacterized protein from Homo sapiens (Human).